Here is a 310-residue protein sequence, read N- to C-terminus: tRNA pseudouridine synthase B (310 aa).

Aspartate 49 (nucleophile) is an active-site residue.

The protein belongs to the pseudouridine synthase TruB family. Type 1 subfamily.

The enzyme catalyses uridine(55) in tRNA = pseudouridine(55) in tRNA. Responsible for synthesis of pseudouridine from uracil-55 in the psi GC loop of transfer RNAs. This Rhizobium johnstonii (strain DSM 114642 / LMG 32736 / 3841) (Rhizobium leguminosarum bv. viciae) protein is tRNA pseudouridine synthase B.